We begin with the raw amino-acid sequence, 32 residues long: Hyaluronidase-Pk1a (32 aa).

N-linked (GlcNAc...) asparagine glycosylation occurs at Asn-23.

Belongs to the glycosyl hydrolase 56 family. Expressed by the venom gland.

It is found in the secreted. It catalyses the reaction Random hydrolysis of (1-&gt;4)-linkages between N-acetyl-beta-D-glucosamine and D-glucuronate residues in hyaluronate.. Its function is as follows. Hydrolyzes high molecular weight hyaluronic acid to produce small oligosaccharides. This chain is Hyaluronidase-Pk1a, found in Phoneutria keyserlingi (Brazilian wandering spider).